The following is a 352-amino-acid chain: Transcriptional regulatory protein AlgP (352 aa).

The disordered stretch occupies residues 128–352 (KALESRKAKP…SNGAAPTSAS (225 aa)). Over residues 138 to 341 (ATKPAAKAAA…SSAASATPAA (204 aa)) the composition is skewed to low complexity.

Its function is as follows. The promoter for a critical alginate biosynthetic gene, AlgD, encoding GDP-mannose dehydrogenase, is activated only under conditions reminiscent of the cystic fibrosis lung (i.e. under high osmolarity), and at least two regulatory genes, AlgP and AlgQ, have been implicated in this activation process. This Pseudomonas aeruginosa (strain ATCC 15692 / DSM 22644 / CIP 104116 / JCM 14847 / LMG 12228 / 1C / PRS 101 / PAO1) protein is Transcriptional regulatory protein AlgP (algP).